A 506-amino-acid chain; its full sequence is uncharacterized protein (506 aa).

This sequence to R.prowazekii RP789, RP027 and RP028.

This is an uncharacterized protein from Synechocystis sp. (strain ATCC 27184 / PCC 6803 / Kazusa).